The following is a 147-amino-acid chain: MFDGIGFMELLLIGVLGLVVLGPERLPVAVRSVTGWIRAMKRMANSVKEELEQELKIEQLHADLKKAESKGLSNLSPELQESIDQLKQAAQSVNRPYQVQDIPAQENQIHNPASQSVSSEASPTASSAPTSEPNQGEDTRSNPKANG.

Residues 2 to 22 (FDGIGFMELLLIGVLGLVVLG) traverse the membrane as a helical segment. The interval 68–147 (ESKGLSNLSP…DTRSNPKANG (80 aa)) is disordered. The segment covering 71–97 (GLSNLSPELQESIDQLKQAAQSVNRPY) has biased composition (polar residues). Residues 112–133 (PASQSVSSEASPTASSAPTSEP) show a composition bias toward low complexity.

This sequence belongs to the TatB family. In terms of assembly, the Tat system comprises two distinct complexes: a TatABC complex, containing multiple copies of TatA, TatB and TatC subunits, and a separate TatA complex, containing only TatA subunits. Substrates initially bind to the TatABC complex, which probably triggers association of the separate TatA complex to form the active translocon.

It localises to the cell inner membrane. In terms of biological role, part of the twin-arginine translocation (Tat) system that transports large folded proteins containing a characteristic twin-arginine motif in their signal peptide across membranes. Together with TatC, TatB is part of a receptor directly interacting with Tat signal peptides. TatB may form an oligomeric binding site that transiently accommodates folded Tat precursor proteins before their translocation. In Shewanella sp. (strain MR-4), this protein is Sec-independent protein translocase protein TatB.